We begin with the raw amino-acid sequence, 521 residues long: Glycogen synthase (521 aa).

Lys-18 provides a ligand contact to ADP-alpha-D-glucose.

It belongs to the glycosyltransferase 1 family. Bacterial/plant glycogen synthase subfamily.

It catalyses the reaction [(1-&gt;4)-alpha-D-glucosyl](n) + ADP-alpha-D-glucose = [(1-&gt;4)-alpha-D-glucosyl](n+1) + ADP + H(+). The protein operates within glycan biosynthesis; glycogen biosynthesis. Functionally, synthesizes alpha-1,4-glucan chains using ADP-glucose. This chain is Glycogen synthase, found in Bordetella petrii (strain ATCC BAA-461 / DSM 12804 / CCUG 43448).